The following is a 206-amino-acid chain: Transcriptional regulator GfcR (206 aa).

This sequence belongs to the purine/pyrimidine phosphoribosyltransferase family. GfcR subfamily.

The protein is Transcriptional regulator GfcR of Methanosphaerula palustris (strain ATCC BAA-1556 / DSM 19958 / E1-9c).